A 255-amino-acid chain; its full sequence is H-2 class II histocompatibility antigen, E-K alpha chain (255 aa).

The signal sequence occupies residues 1–25; that stretch reads MATIGALVLRFFFIAVLMSSQKSWA. Residues 26–109 form an alpha-1 region; that stretch reads IKEEHTIIQA…ERSNNTPDAN (84 aa). Residues 26 to 216 lie on the Extracellular side of the membrane; it reads IKEEHTIIQA…EKTLLPETKE (191 aa). Residues 110 to 203 are alpha-2; it reads VAPEVTVLSR…GLEEPLRKHW (94 aa). In terms of domain architecture, Ig-like C1-type spans 112 to 204; the sequence is PEVTVLSRSP…LEEPLRKHWE (93 aa). Cysteines 132 and 188 form a disulfide. Asn143 carries N-linked (GlcNAc...) asparagine glycosylation. Residues 204–216 form a connecting peptide region; sequence EFEEKTLLPETKE. A helical transmembrane segment spans residues 217–242; the sequence is NVVCALGLFVGLVGIVVGIILIMKGI. Over 243–255 the chain is Cytoplasmic; it reads KKRNVVERRQGAL.

Belongs to the MHC class II family.

It localises to the membrane. The protein is H-2 class II histocompatibility antigen, E-K alpha chain of Mus musculus (Mouse).